The sequence spans 193 residues: Glycerol-3-phosphate acyltransferase (193 aa).

The next 5 helical transmembrane spans lie at 2 to 22, 51 to 71, 78 to 98, 112 to 132, and 154 to 174; these read AFII…AVIV, QAAF…VLIA, GVSL…PVYF, VLLG…VIVV, and IIAG…LLIW.

It belongs to the PlsY family. In terms of assembly, probably interacts with PlsX.

The protein resides in the cell inner membrane. The enzyme catalyses an acyl phosphate + sn-glycerol 3-phosphate = a 1-acyl-sn-glycero-3-phosphate + phosphate. Its pathway is lipid metabolism; phospholipid metabolism. Its function is as follows. Catalyzes the transfer of an acyl group from acyl-phosphate (acyl-PO(4)) to glycerol-3-phosphate (G3P) to form lysophosphatidic acid (LPA). This enzyme utilizes acyl-phosphate as fatty acyl donor, but not acyl-CoA or acyl-ACP. This is Glycerol-3-phosphate acyltransferase from Coxiella burnetii (strain CbuG_Q212) (Coxiella burnetii (strain Q212)).